A 369-amino-acid chain; its full sequence is 4-hydroxy-3-methylbut-2-en-1-yl diphosphate synthase (flavodoxin) (369 aa).

Residues Cys270, Cys273, Cys305, and Glu312 each contribute to the [4Fe-4S] cluster site.

It belongs to the IspG family. [4Fe-4S] cluster is required as a cofactor.

The enzyme catalyses (2E)-4-hydroxy-3-methylbut-2-enyl diphosphate + oxidized [flavodoxin] + H2O + 2 H(+) = 2-C-methyl-D-erythritol 2,4-cyclic diphosphate + reduced [flavodoxin]. The protein operates within isoprenoid biosynthesis; isopentenyl diphosphate biosynthesis via DXP pathway; isopentenyl diphosphate from 1-deoxy-D-xylulose 5-phosphate: step 5/6. In terms of biological role, converts 2C-methyl-D-erythritol 2,4-cyclodiphosphate (ME-2,4cPP) into 1-hydroxy-2-methyl-2-(E)-butenyl 4-diphosphate. This chain is 4-hydroxy-3-methylbut-2-en-1-yl diphosphate synthase (flavodoxin), found in Psychromonas ingrahamii (strain DSM 17664 / CCUG 51855 / 37).